We begin with the raw amino-acid sequence, 292 residues long: MESLSLPVLNPLLASGSNLFRNQHSRMTSSMVSSLKSPIGGTSLSTVRRFGVGVVRMQAVDEDIDLKQMRDIAAAKKRWDGLLREGKVKLLTPREAGYAISLSNKPLLDVRPSSERNKAWIKGSTWVPIFDNDDNLDAGTLSKKVTSFAMGGWWSGAPTLSFNRLFLSKVEEKFPKDSELIVACQKGLRSLAACELLYNAGYENLFWVQGGLESAQDEDLVTEGVQPLKLAGIGGFSEFLGWTDQQRAQAAKEGWGYRLVYTARLFGVVLAADALFVGAQQLGHYIQELRGH.

The transit peptide at 1-56 directs the protein to the chloroplast; that stretch reads MESLSLPVLNPLLASGSNLFRNQHSRMTSSMVSSLKSPIGGTSLSTVRRFGVGVVR. In terms of domain architecture, Rhodanese spans 101-224; it reads SLSNKPLLDV…AQDEDLVTEG (124 aa). The active-site Cysteine persulfide intermediate is Cys184.

Its subcellular location is the plastid. The protein resides in the chloroplast. In Arabidopsis thaliana (Mouse-ear cress), this protein is Rhodanese-like domain-containing protein 11, chloroplastic (STR11).